A 126-amino-acid chain; its full sequence is UPF0235 protein C15orf40 homolog (126 aa).

The interval methionine 1–lysine 33 is disordered. At serine 89 the chain carries Phosphoserine.

It belongs to the UPF0235 family.

The protein is UPF0235 protein C15orf40 homolog of Rattus norvegicus (Rat).